The primary structure comprises 789 residues: Phenylalanine--tRNA ligase beta subunit (789 aa).

The tRNA-binding domain maps to K38–F151. One can recognise a B5 domain in the interval H398 to E474. Positions 452, 458, 461, and 462 each coordinate Mg(2+). The FDX-ACB domain occupies L694 to R787.

It belongs to the phenylalanyl-tRNA synthetase beta subunit family. Type 1 subfamily. In terms of assembly, tetramer of two alpha and two beta subunits. Mg(2+) is required as a cofactor.

It localises to the cytoplasm. The catalysed reaction is tRNA(Phe) + L-phenylalanine + ATP = L-phenylalanyl-tRNA(Phe) + AMP + diphosphate + H(+). This chain is Phenylalanine--tRNA ligase beta subunit, found in Ehrlichia ruminantium (strain Welgevonden).